A 205-amino-acid chain; its full sequence is Fe/S biogenesis protein NfuA (205 aa).

2 residues coordinate [4Fe-4S] cluster: cysteine 162 and cysteine 165.

It belongs to the NfuA family. As to quaternary structure, homodimer. Requires [4Fe-4S] cluster as cofactor.

Involved in iron-sulfur cluster biogenesis. Binds a 4Fe-4S cluster, can transfer this cluster to apoproteins, and thereby intervenes in the maturation of Fe/S proteins. Could also act as a scaffold/chaperone for damaged Fe/S proteins. The polypeptide is Fe/S biogenesis protein NfuA (Blochmanniella floridana).